Here is a 278-residue protein sequence, read N- to C-terminus: Expansin-B17 (278 aa).

The first 26 residues, 1–26 (MAAASSRSFSLCVLLLLLLLAPPISA), serve as a signal peptide directing secretion. Positions 66–176 (GGACGYGSLV…RRTACKYGGK (111 aa)) constitute an Expansin-like EG45 domain. 3 cysteine pairs are disulfide-bonded: C69–C98, C101–C171, and C106–C112. Residues 189 to 270 (FWLSLLVEFE…NWKPTATYTS (82 aa)) enclose the Expansin-like CBD domain.

Belongs to the expansin family. Expansin B subfamily.

It is found in the secreted. The protein resides in the cell wall. Its subcellular location is the membrane. In terms of biological role, may cause loosening and extension of plant cell walls by disrupting non-covalent bonding between cellulose microfibrils and matrix glucans. No enzymatic activity has been found. May be required for rapid internodal elongation in deepwater rice during submergence. The protein is Expansin-B17 (EXPB17) of Oryza sativa subsp. japonica (Rice).